A 165-amino-acid chain; its full sequence is UPF0178 protein Bphyt_5655 (165 aa).

Disordered stretches follow at residues 115-134 and 139-165; these read LRGS…RDSK and ELDR…PPTE.

This sequence belongs to the UPF0178 family.

This Paraburkholderia phytofirmans (strain DSM 17436 / LMG 22146 / PsJN) (Burkholderia phytofirmans) protein is UPF0178 protein Bphyt_5655.